The chain runs to 567 residues: Vacuolar fusion protein MON1 homolog (567 aa).

2 disordered regions span residues 1–52 (MDMD…DDEG) and 65–129 (TSAS…DDTS). Residues 7-19 (TNNPSPPGPPDSP) are compositionally biased toward pro residues. Positions 43–52 (DDYDDDDDEG) are enriched in acidic residues.

Belongs to the MON1/SAND family. In terms of assembly, interacts with CCZ1A, CCZ1B and RABF2B.

It localises to the endosome. The protein localises to the prevacuolar compartment. In terms of biological role, plays an important role in membrane trafficking through the secretory apparatus. In complex with CCZ1, acts as a guanine exchange factor (GEF) for Rab7 protein family. Promotes the exchange of GDP to GTP, converting it from an inactive GDP-bound form into an active GTP-bound form. The active form is involved in protein trafficking from prevacuolar compartments (PVCs) to vacuoles. May serve as a linker between Rab5 and Rab7 protein families in PVCs and mediate PVC maturation. This chain is Vacuolar fusion protein MON1 homolog, found in Oryza sativa subsp. japonica (Rice).